The primary structure comprises 540 residues: L-aspartate oxidase (540 aa).

Residues 16–19 (SGAA), K38, 45–52 (STFYAQGG), and D223 contribute to the FAD site. The active-site Proton donor/acceptor is R290. Residues E375 and 391 to 392 (SL) contribute to the FAD site.

Belongs to the FAD-dependent oxidoreductase 2 family. NadB subfamily. It depends on FAD as a cofactor.

Its subcellular location is the cytoplasm. It carries out the reaction L-aspartate + O2 = iminosuccinate + H2O2. It functions in the pathway cofactor biosynthesis; NAD(+) biosynthesis; iminoaspartate from L-aspartate (oxidase route): step 1/1. Catalyzes the oxidation of L-aspartate to iminoaspartate, the first step in the de novo biosynthesis of NAD(+). The sequence is that of L-aspartate oxidase (nadB) from Salmonella typhimurium (strain LT2 / SGSC1412 / ATCC 700720).